The following is a 194-amino-acid chain: MASMQHFSLAALLLAASICLGDADRTECQLPLDKGTPCTQEGGVKPSVAWWHDDKSGICLSFKYTGCGGNANRFTTIKNCEQHCKMPDRGACALGKKPAEDSNGEQLVCAGMREDKCPNGYQCKMMAFMGLCCPTKEEELFAREYEGVCKSGKPVKMDRGSGWMMTILGKSCDDQFCPEDAKCERGKLFANCCK.

The first 23 residues, 1 to 23, serve as a signal peptide directing secretion; the sequence is MASMQHFSLAALLLAASICLGDA. In terms of domain architecture, BPTI/Kunitz inhibitor spans 28–84; the sequence is CQLPLDKGTPCTQEGGVKPSVAWWHDDKSGICLSFKYTGCGGNANRFTTIKNCEQHC. Disulfide bonds link Cys-28-Cys-84, Cys-38-Cys-67, and Cys-59-Cys-80. A WR1 domain is found at 90–134; sequence GACALGKKPAEDSNGEQLVCAGMREDKCPNGYQCKMMAFMGLCCP.

The protein localises to the secreted. This chain is Major allergen Ani s 1, found in Anisakis simplex (Herring worm).